The following is a 457-amino-acid chain: Adenylosuccinate synthetase isozyme 2 B (457 aa).

GTP contacts are provided by residues 40-46 (GDEGKGK) and 68-70 (GHT). The active-site Proton acceptor is the Asp41. Asp41 and Gly68 together coordinate Mg(2+). Asp41 provides a ligand contact to substrate. IMP-binding positions include 41-44 (DEGK), 66-69 (NAGH), Thr163, Arg177, Asn256, Thr271, and Arg335. His69 (proton donor) is an active-site residue. 331–337 (VTTGRKR) lines the substrate pocket. GTP contacts are provided by residues Arg337, 363-365 (KLD), and 445-448 (GVGK).

This sequence belongs to the adenylosuccinate synthetase family. In terms of assembly, homodimer. Mg(2+) serves as cofactor.

Its subcellular location is the cytoplasm. It is found in the mitochondrion. It catalyses the reaction IMP + L-aspartate + GTP = N(6)-(1,2-dicarboxyethyl)-AMP + GDP + phosphate + 2 H(+). It participates in purine metabolism; AMP biosynthesis via de novo pathway; AMP from IMP: step 1/2. Its activity is regulated as follows. Inhibited competitively by AMP and IMP and non-competitively by fructose 1,6-bisphosphate. Plays an important role in the de novo pathway and in the salvage pathway of purine nucleotide biosynthesis. Catalyzes the first committed step in the biosynthesis of AMP from IMP. In Xenopus tropicalis (Western clawed frog), this protein is Adenylosuccinate synthetase isozyme 2 B (adss2-b).